The following is a 163-amino-acid chain: Nucleotide-binding protein RHA1_ro01989 (163 aa).

This sequence belongs to the YajQ family.

Functionally, nucleotide-binding protein. The protein is Nucleotide-binding protein RHA1_ro01989 of Rhodococcus jostii (strain RHA1).